Consider the following 538-residue polypeptide: Potassium channel subfamily K member 10 (538 aa).

The Cytoplasmic portion of the chain corresponds to 1-71 (MFFLYTDFFL…GLQTVMKWKT (71 aa)). Residues 72–92 (VVAIFVVVVVYLVTGGLVFRA) traverse the membrane as a helical segment. Asparagine 144, asparagine 147, and asparagine 148 each carry an N-linked (GlcNAc...) asparagine glycan. The segment at residues 154 to 180 (LGSAFFFAGTVITTIGYGNIAPSTEGG) is an intramembrane region (pore-forming). Residues threonine 167, isoleucine 168, glycine 169, and tyrosine 170 each contribute to the K(+) site. The segment at 167–172 (TIGYGN) is selectivity filter 1. A helical transmembrane segment spans residues 182-202 (IFCILYAIFGIPLFGFLLAGI). The Cytoplasmic segment spans residues 203–233 (GDQLGTIFGKSIARVEKVFRKKQVSQTKIRV). A helical membrane pass occupies residues 234 to 254 (ISTILFILAGCIVFVTIPAVI). Positions 263 to 294 (ALESIYFVVVTLTTVGFGDFVAGGNAGINYRE) form an intramembrane region, pore-forming. Threonine 276, valine 277, glycine 278, and phenylalanine 279 together coordinate K(+). Residues 276–281 (TVGFGD) form a selectivity filter 2 region. Residues 299–319 (LVWFWILVGLAYFAAVLSMIG) traverse the membrane as a helical segment. Topologically, residues 320–538 (DWLRVLSKKT…ENNSLLEDRN (219 aa)) are cytoplasmic. Residues 412–421 (SQESINNRPN) show a composition bias toward polar residues. Disordered regions lie at residues 412–443 (SQESINNRPNNLRLKGPEQLNKHGQGASEDNI) and 510–538 (QHAELENGMIPTDTKDREPENNSLLEDRN). The segment covering 522-538 (DTKDREPENNSLLEDRN) has biased composition (basic and acidic residues).

This sequence belongs to the two pore domain potassium channel (TC 1.A.1.8) family. As to quaternary structure, homodimer; disulfide-linked. Forms heterodimers with other 2-pore domain K(+) channel subunits, such as KCNK2, KCNK4 and KCNK18. As to expression, abundantly expressed in pancreas and kidney and to a lower level in brain, testis, colon, and small intestine. In brain, mainly expressed in cerebellum, occipital lobe, putamen, and thalamus. No expression is detected in amygdala and spinal cord. In terms of tissue distribution, strongly expressed in kidney (primarily in the proximal tubule) and pancreas. Abundantly expressed in brain.

Its subcellular location is the cell membrane. The catalysed reaction is K(+)(in) = K(+)(out). It catalyses the reaction Rb(+)(in) = Rb(+)(out). The enzyme catalyses Cs(+)(in) = Cs(+)(out). With respect to regulation, activated by various stimuli including acidic pH, anesthetics chloroform, halothane and isoflurane, mechanical stretch, lipids such as arachidonic, docosahexaenoic and linoleic polyunsaturated fatty acids and lysophosphatidylcholine and lysophosphatidylinositol lysophospholipids. Inhibited by norfluoxetine, the active metabolite of antidepressant fluoxetine (Prozac). K(+) channel that conducts voltage-dependent outward rectifying currents upon membrane depolarization. Voltage sensing is coupled to K(+) electrochemical gradient in an 'ion flux gating' mode where outward but not inward ion flow opens the gate. Converts to voltage-independent 'leak' conductance mode upon stimulation by various stimuli including mechanical membrane stretch, acidic pH, heat and lipids. Homo- and heterodimerizes to form functional channels with distinct regulatory and gating properties. In trigeminal ganglia sensory neurons, the heterodimer of KCNK10/TREK-2 and KCNK18/TRESK inhibits neuronal firing and neurogenic inflammation by stabilizing the resting membrane potential at K(+) equilibrium potential as well as by regulating the threshold of action potentials and the spike frequency. Permeable to other monovalent ions such as Rb(+) and Cs(+). In Homo sapiens (Human), this protein is Potassium channel subfamily K member 10.